Here is a 292-residue protein sequence, read N- to C-terminus: MAFMKKYLLPLLGLFLAYYYYSANEEFRPEMLQGKKVIVTGASKGIGKEIAFHLAKMGAHVVVTARSKETLQEVVAHCLKLGAASAHYIAGTMEDMTFAEQFVAKAGKLMGGLDMLILNHITNASLMFFNNDIHHVRKEMEVNFLSYVVLTVAALPMLKQSNGSIVVVSSLAGKIAHPLIAPYSASKFALDGFFSAIRKEHALTNVNVSITLCVLGLIDTDTAMKEVSGKIDMKAAPKEECALEIIKGGALRQDEVYYGNLQWTPLLLGNPGKRLIEFLHLRKFDISKLVNN.

At 2–7 the chain is on the cytoplasmic side; it reads AFMKKY. Residues 8 to 24 form a helical; Signal-anchor for type II membrane protein membrane-spanning segment; that stretch reads LLPLLGLFLAYYYYSAN. Residues 25-292 lie on the Lumenal side of the membrane; it reads EEFRPEMLQG…KFDISKLVNN (268 aa). Residues 41 to 67, 92 to 93, and 119 to 121 contribute to the NADP(+) site; these read GASK…TARS, TM, and NHI. N-linked (GlcNAc...) asparagine glycans are attached at residues Asn-123 and Asn-162. Residue Ser-170 coordinates substrate. The active-site Proton acceptor is Tyr-183. 183 to 187 is an NADP(+) binding site; that stretch reads YSASK. Residue Asn-207 is glycosylated (N-linked (GlcNAc...) asparagine). 218–222 contributes to the NADP(+) binding site; it reads IDTDT.

This sequence belongs to the short-chain dehydrogenases/reductases (SDR) family. As to quaternary structure, homodimer. In terms of processing, glycosylated. In terms of tissue distribution, expressed in the eye.

Its subcellular location is the endoplasmic reticulum membrane. It localises to the microsome membrane. It carries out the reaction an 11beta-hydroxysteroid + NADP(+) = an 11-oxosteroid + NADPH + H(+). The catalysed reaction is corticosterone + NADP(+) = 11-dehydrocorticosterone + NADPH + H(+). It catalyses the reaction cortisone + NADPH + H(+) = cortisol + NADP(+). The enzyme catalyses a 7beta-hydroxysteroid + NADP(+) = a 7-oxosteroid + NADPH + H(+). It carries out the reaction 7-oxocholesterol + NADPH + H(+) = 7beta-hydroxycholesterol + NADP(+). The catalysed reaction is chenodeoxycholate + NADP(+) = 7-oxolithocholate + NADPH + H(+). It catalyses the reaction 7-oxolithocholate + NADPH + H(+) = ursodeoxycholate + NADP(+). The enzyme catalyses glycochenodeoxycholate + NADP(+) = 7-oxoglycolithocholate + NADPH + H(+). It carries out the reaction taurochenodeoxycholate + NADP(+) = 7-oxotaurolithocholate + NADPH + H(+). The catalysed reaction is tauroursodeoxycholate + NADP(+) = 7-oxotaurolithocholate + NADPH + H(+). It catalyses the reaction glycoursodeoxycholate + NADP(+) = 7-oxoglycolithocholate + NADPH + H(+). The enzyme catalyses 7-oxopregnenolone + NADPH + H(+) = 7beta-hydroxypregnenolone + NADP(+). It carries out the reaction 3beta,7alpha-dihydroxyandrost-5-en-17-one + NADP(+) = 3beta-hydroxy-5-androstene-7,17-dione + NADPH + H(+). The catalysed reaction is 3beta-hydroxy-5-androstene-7,17-dione + NADPH + H(+) = 3beta,7beta-dihydroxyandrost-5-en-17-one + NADP(+). It catalyses the reaction 3beta-hydroxy-5alpha-androstane-7,17-dione + NADPH + H(+) = 3beta,7beta-dihydroxy-5alpha-androstan-17-one + NADP(+). It participates in steroid metabolism. Its function is as follows. Controls the reversible conversion of biologically active glucocorticoids such as cortisone to cortisol, and 11-dehydrocorticosterone to corticosterone in the presence of NADP(H). Participates in the corticosteroid receptor-mediated anti-inflammatory response, as well as metabolic and homeostatic processes. Plays a role in the secretion of aqueous humor in the eye, maintaining a normotensive, intraocular environment. Bidirectional in vitro, predominantly functions as a reductase in vivo, thereby increasing the concentration of active glucocorticoids. It has broad substrate specificity, besides glucocorticoids, it accepts other steroid and sterol substrates. It has broad substrate specificity, besides glucocorticoids, it accepts other steroid and sterol substrates. Interconverts 7-oxo- and 7-hydroxy-neurosteroids such as 7-oxopregnenolone and 7beta-hydroxypregnenolone, 7-oxodehydroepiandrosterone (3beta-hydroxy-5-androstene-7,17-dione) and 7beta-hydroxydehydroepiandrosterone (3beta,7beta-dihydroxyandrost-5-en-17-one), among others. Catalyzes the stereo-specific conversion of the major dietary oxysterol, 7-ketocholesterol (7-oxocholesterol), into the more polar 7-beta-hydroxycholesterol metabolite. 7-oxocholesterol is one of the most important oxysterols, it participates in several events such as induction of apoptosis, accumulation in atherosclerotic lesions, lipid peroxidation, and induction of foam cell formation. Mediates the 7-oxo reduction of 7-oxolithocholate mainly to chenodeoxycholate, and to a lesser extent to ursodeoxycholate, both in its free form and when conjugated to glycine or taurine, providing a link between glucocorticoid activation and bile acid metabolism. Catalyzes the synthesis of 7-beta-25-dihydroxycholesterol from 7-oxo-25-hydroxycholesterol in vitro, which acts as a ligand for the G-protein-coupled receptor (GPCR) Epstein-Barr virus-induced gene 2 (EBI2) and may thereby regulate immune cell migration. The chain is 11-beta-hydroxysteroid dehydrogenase 1 from Oryctolagus cuniculus (Rabbit).